Here is a 552-residue protein sequence, read N- to C-terminus: DUF724 domain-containing protein 10 (552 aa).

Residues 308–361 (SSLTQGSGDKTEVETQRKTFPKKTLPRNQNGSGNDSTLENENSNRKRKREENLC) form a disordered region. Residues 333 to 348 (PRNQNGSGNDSTLENE) show a composition bias toward polar residues. One can recognise a DUF724 domain in the interval 371 to 543 (ILFEKKLPVW…LEFQATASAP (173 aa)).

As to expression, expressed at low levels in leaves, stems, flowers and siliques.

Its function is as follows. May be involved in the polar growth of plant cells via transportation of RNAs. In Arabidopsis thaliana (Mouse-ear cress), this protein is DUF724 domain-containing protein 10.